The primary structure comprises 440 residues: Chromosome partition protein MukF (440 aa).

The segment at 208 to 236 is leucine-zipper; that stretch reads LSETSGTLRELQDTLEAAGDKLQANLLRI.

It belongs to the MukF family. In terms of assembly, interacts, and probably forms a ternary complex, with MukE and MukB via its C-terminal region. The complex formation is stimulated by calcium or magnesium. It is required for an interaction between MukE and MukB.

Its subcellular location is the cytoplasm. It is found in the nucleoid. Its function is as follows. Involved in chromosome condensation, segregation and cell cycle progression. May participate in facilitating chromosome segregation by condensation DNA from both sides of a centrally located replisome during cell division. Not required for mini-F plasmid partitioning. Probably acts via its interaction with MukB and MukE. Overexpression results in anucleate cells. It has a calcium binding activity. This Serratia proteamaculans (strain 568) protein is Chromosome partition protein MukF.